The sequence spans 185 residues: Ribosome-recycling factor (185 aa).

The protein belongs to the RRF family.

The protein localises to the cytoplasm. Responsible for the release of ribosomes from messenger RNA at the termination of protein biosynthesis. May increase the efficiency of translation by recycling ribosomes from one round of translation to another. The polypeptide is Ribosome-recycling factor (Shewanella woodyi (strain ATCC 51908 / MS32)).